The following is a 356-amino-acid chain: Palmitoyltransferase swf1 (356 aa).

Topologically, residues 1 to 2 are lumenal; that stretch reads MD. The chain crosses the membrane as a helical span at residues 3–23; the sequence is FFYKYLALVAIASLMVFILLF. Over 24 to 78 the chain is Cytoplasmic; that stretch reads GQIPKLKYTVIGKLNRFFMVTIPYHLHVLDSRYADGRCSAAMRSLSNYVLYKNNP. Residues 79 to 99 traverse the membrane as a helical segment; it reads LVVFLYLALITIGIASFFIYG. Over 100–107 the chain is Lumenal; sequence SSLTQKFS. The helical transmembrane segment at 108 to 128 threads the bilayer; it reads IIDWISVLTSVLLPYISLYIA. Topologically, residues 129 to 201 are cytoplasmic; that stretch reads AKSNPGKIDL…NNCVGLNNAR (73 aa). Positions 158-208 constitute a DHHC domain; the sequence is NKCSTCKFEKPARSKHCRLCNICVEKFDHHCIWINNCVGLNNARYFFLFLL. Residues 202-222 traverse the membrane as a helical segment; that stretch reads YFFLFLLCTIQLLFHSILRLG. The Lumenal portion of the chain corresponds to 223–253; the sequence is YHFNALRDMRQYPSFLRSWWFAIKSEGELGS. A helical membrane pass occupies residues 254–274; it reads VFLISLICSVLVLCLLGYEFF. Residues 275 to 356 lie on the Cytoplasmic side of the membrane; it reads LVYAGYTTNE…FPYRHLYSTT (82 aa).

It belongs to the DHHC palmitoyltransferase family. SWF1 subfamily.

Its subcellular location is the endoplasmic reticulum membrane. It catalyses the reaction L-cysteinyl-[protein] + hexadecanoyl-CoA = S-hexadecanoyl-L-cysteinyl-[protein] + CoA. Palmitoyltransferase that targets several endosomal SNAREs. Palmitoylates the SNAREs at cysteine residues close to the cytoplasmic end of their transmembrane domain. May have a role in the cellular quality control of transmembrane domain-containing proteins. The chain is Palmitoyltransferase swf1 (swf1) from Schizosaccharomyces pombe (strain 972 / ATCC 24843) (Fission yeast).